The following is a 274-amino-acid chain: S-adenosylmethionine decarboxylase proenzyme (274 aa).

Ser119 acts as the Schiff-base intermediate with substrate; via pyruvic acid in catalysis. At Ser119 the chain carries Pyruvic acid (Ser); by autocatalysis. His124 serves as the catalytic Proton acceptor; for processing activity. The active-site Proton donor; for catalytic activity is Cys147.

It belongs to the prokaryotic AdoMetDC family. Type 2 subfamily. In terms of assembly, heterooctamer of four alpha and four beta chains arranged as a tetramer of alpha/beta heterodimers. It depends on pyruvate as a cofactor. Is synthesized initially as an inactive proenzyme. Formation of the active enzyme involves a self-maturation process in which the active site pyruvoyl group is generated from an internal serine residue via an autocatalytic post-translational modification. Two non-identical subunits are generated from the proenzyme in this reaction, and the pyruvate is formed at the N-terminus of the alpha chain, which is derived from the carboxyl end of the proenzyme. The post-translation cleavage follows an unusual pathway, termed non-hydrolytic serinolysis, in which the side chain hydroxyl group of the serine supplies its oxygen atom to form the C-terminus of the beta chain, while the remainder of the serine residue undergoes an oxidative deamination to produce ammonia and the pyruvoyl group blocking the N-terminus of the alpha chain.

It catalyses the reaction S-adenosyl-L-methionine + H(+) = S-adenosyl 3-(methylsulfanyl)propylamine + CO2. Its pathway is amine and polyamine biosynthesis; S-adenosylmethioninamine biosynthesis; S-adenosylmethioninamine from S-adenosyl-L-methionine: step 1/1. Its function is as follows. Catalyzes the decarboxylation of S-adenosylmethionine to S-adenosylmethioninamine (dcAdoMet), the propylamine donor required for the synthesis of the polyamines spermine and spermidine from the diamine putrescine. This is S-adenosylmethionine decarboxylase proenzyme from Clostridium acetobutylicum (strain ATCC 824 / DSM 792 / JCM 1419 / IAM 19013 / LMG 5710 / NBRC 13948 / NRRL B-527 / VKM B-1787 / 2291 / W).